The sequence spans 181 residues: Large ribosomal subunit protein uL6 (181 aa).

It belongs to the universal ribosomal protein uL6 family. Part of the 50S ribosomal subunit.

Functionally, this protein binds to the 23S rRNA, and is important in its secondary structure. It is located near the subunit interface in the base of the L7/L12 stalk, and near the tRNA binding site of the peptidyltransferase center. The sequence is that of Large ribosomal subunit protein uL6 from Synechococcus sp. (strain CC9605).